The primary structure comprises 614 residues: DNA mismatch repair protein MutL (614 aa).

This sequence belongs to the DNA mismatch repair MutL/HexB family.

This protein is involved in the repair of mismatches in DNA. It is required for dam-dependent methyl-directed DNA mismatch repair. May act as a 'molecular matchmaker', a protein that promotes the formation of a stable complex between two or more DNA-binding proteins in an ATP-dependent manner without itself being part of a final effector complex. This is DNA mismatch repair protein MutL from Leptospira biflexa serovar Patoc (strain Patoc 1 / ATCC 23582 / Paris).